A 702-amino-acid polypeptide reads, in one-letter code: Ribosomal RNA large subunit methyltransferase K/L (702 aa).

The THUMP domain occupies L43 to L154.

Belongs to the methyltransferase superfamily. RlmKL family.

It is found in the cytoplasm. It carries out the reaction guanosine(2445) in 23S rRNA + S-adenosyl-L-methionine = N(2)-methylguanosine(2445) in 23S rRNA + S-adenosyl-L-homocysteine + H(+). It catalyses the reaction guanosine(2069) in 23S rRNA + S-adenosyl-L-methionine = N(2)-methylguanosine(2069) in 23S rRNA + S-adenosyl-L-homocysteine + H(+). Specifically methylates the guanine in position 2445 (m2G2445) and the guanine in position 2069 (m7G2069) of 23S rRNA. This Escherichia coli O139:H28 (strain E24377A / ETEC) protein is Ribosomal RNA large subunit methyltransferase K/L.